The chain runs to 255 residues: Homeobox protein Hox-D4 (255 aa).

Residues Glu-31–Lys-128 form a disordered region. A compositionally biased stretch (pro residues) spans Glu-94 to Gly-109. Positions Val-133–Lys-138 match the Antp-type hexapeptide motif. Residues Pro-154–His-213 constitute a DNA-binding region (homeobox). Positions Asp-212–Leu-255 are disordered. Over residues Ser-222–Ser-234 the composition is skewed to low complexity. Residues Ala-245 to Leu-255 are compositionally biased toward basic and acidic residues.

Belongs to the Antp homeobox family. Deformed subfamily. As to quaternary structure, forms a DNA-binding heterodimer with transcription factor PBX1.

It localises to the nucleus. Sequence-specific transcription factor which is part of a developmental regulatory system that provides cells with specific positional identities on the anterior-posterior axis. This chain is Homeobox protein Hox-D4 (HOXD4), found in Gorilla gorilla gorilla (Western lowland gorilla).